The sequence spans 399 residues: Subtilisin-like protease 4 (399 aa).

The signal sequence occupies residues 1–19 (MVCLKTLSVFLAAFAAADA). Residues 20 to 118 (RAVFKTQGHK…VEQDQVVRIS (99 aa)) constitute a propeptide that is removed on maturation. An Inhibitor I9 domain is found at 38–117 (YIVVMKDGVS…YVEQDQVVRI (80 aa)). A Peptidase S8 domain is found at 128-399 (SWGLGRVSHR…NRLLYNGSGQ (272 aa)). Catalysis depends on charge relay system residues D160 and H191. N-linked (GlcNAc...) asparagine glycans are attached at residues N252 and N308. Residue S346 is the Charge relay system of the active site. An N-linked (GlcNAc...) asparagine glycan is attached at N395.

Belongs to the peptidase S8 family.

The protein resides in the secreted. Its function is as follows. Secreted subtilisin-like serine protease with keratinolytic activity that contributes to pathogenicity. This chain is Subtilisin-like protease 4 (SUB4), found in Arthroderma benhamiae (strain ATCC MYA-4681 / CBS 112371) (Trichophyton mentagrophytes).